A 317-amino-acid chain; its full sequence is 4-diphosphocytidyl-2-C-methyl-D-erythritol kinase (317 aa).

K11 is a catalytic residue. Residue P99 to T109 participates in ATP binding. Residue D141 is part of the active site.

It belongs to the GHMP kinase family. IspE subfamily.

It carries out the reaction 4-CDP-2-C-methyl-D-erythritol + ATP = 4-CDP-2-C-methyl-D-erythritol 2-phosphate + ADP + H(+). Its pathway is isoprenoid biosynthesis; isopentenyl diphosphate biosynthesis via DXP pathway; isopentenyl diphosphate from 1-deoxy-D-xylulose 5-phosphate: step 3/6. Its function is as follows. Catalyzes the phosphorylation of the position 2 hydroxy group of 4-diphosphocytidyl-2C-methyl-D-erythritol. In Nostoc sp. (strain PCC 7120 / SAG 25.82 / UTEX 2576), this protein is 4-diphosphocytidyl-2-C-methyl-D-erythritol kinase.